The following is a 520-amino-acid chain: MSNKSDVIVVGGGISGMAAAKLLHDCGLSVVVLEARDRVGGRTYTIRNKNVKYVDLGGSYVGPTQNRILRLAKELGLETYKVNEVERLIHFVKGKSYAFRGPFPPVWNPITYLDNNNLWRTMDEMGQEIPSDAPWKAPLAEEWDYMTMKELLDKICWTKSTKQIATLFVNLCVTAETHEVSALWFLWYVKQCGGTTRIISTTNGGQERKFIGGSGQVSERIKDILGDRVKLERPVIHIDQTGENVIVKTLNHEIYEAKYVISAIPPALGMKIHYSPPLPMLRNQLISRVPLGSVIKCMVYYKEPFWRKKDFCGTMVIEGEEAPIAYTLDDTKPDGTYAAIMGFILAHKARKLVRLTKEERLRKLCELYAKVLNSQEALQPVHYEEKNWCEEQYSGGCYTTYFPPGILTQYGRVLRQPVGKIFFAGTETASHWSGYMEGAVEAGERAAREILHAIGKIPEDEIWQPEPESLDVPARPITSTFLERHLPSVPGLLKLFGLTTILSATALGFLAHKRGLFVHF.

N-acetylserine is present on serine 2. Residues 2-489 (SNKSDVIVVG…TFLERHLPSV (488 aa)) are Cytoplasmic-facing. N6-acetyllysine occurs at positions 52 and 248. The residue at position 397 (cysteine 397) is an S-8alpha-FAD cysteine. The chain crosses the membrane as a helical; Anchor for type IV membrane protein span at residues 490–516 (PGLLKLFGLTTILSATALGFLAHKRGL). Residues 517-520 (FVHF) lie on the Mitochondrial intermembrane side of the membrane.

This sequence belongs to the flavin monoamine oxidase family. In terms of assembly, monomer, homo- or heterodimer (containing two subunits of similar size). Each subunit contains a covalently bound flavin. Enzymatically active as monomer. Requires FAD as cofactor.

It is found in the mitochondrion outer membrane. It carries out the reaction a secondary aliphatic amine + O2 + H2O = a primary amine + an aldehyde + H2O2. The enzyme catalyses (R)-adrenaline + O2 + H2O = (R)-3,4-dihydroxymandelaldehyde + methylamine + H2O2. The catalysed reaction is a primary methyl amine + O2 + H2O = an aldehyde + H2O2 + NH4(+). It catalyses the reaction benzylamine + O2 + H2O = benzaldehyde + H2O2 + NH4(+). It carries out the reaction dopamine + O2 + H2O = 3,4-dihydroxyphenylacetaldehyde + H2O2 + NH4(+). The enzyme catalyses tyramine + O2 + H2O = (4-hydroxyphenyl)acetaldehyde + H2O2 + NH4(+). The catalysed reaction is (R)-noradrenaline + O2 + H2O = (R)-3,4-dihydroxymandelaldehyde + H2O2 + NH4(+). It catalyses the reaction 2-phenylethylamine + O2 + H2O = 2-phenylacetaldehyde + H2O2 + NH4(+). It carries out the reaction N-acetylputrescine + O2 + H2O = 4-acetamidobutanal + H2O2 + NH4(+). Its function is as follows. Catalyzes the oxidative deamination of primary and some secondary amines such as neurotransmitters, and exogenous amines including the tertiary amine, neurotoxin 1-methyl-4-phenyl-1,2,3,6-tetrahydropyridine (MPTP), with concomitant reduction of oxygen to hydrogen peroxide and participates in the metabolism of neuroactive and vasoactive amines in the central nervous system and peripheral tissues. Preferentially degrades benzylamine and phenylethylamine. In Mus musculus (Mouse), this protein is Amine oxidase [flavin-containing] B.